Here is a 323-residue protein sequence, read N- to C-terminus: Ferrochelatase (323 aa).

Fe cation-binding residues include His196 and Glu277.

This sequence belongs to the ferrochelatase family.

The protein localises to the cytoplasm. It catalyses the reaction heme b + 2 H(+) = protoporphyrin IX + Fe(2+). It functions in the pathway porphyrin-containing compound metabolism; protoheme biosynthesis; protoheme from protoporphyrin-IX: step 1/1. Functionally, catalyzes the ferrous insertion into protoporphyrin IX. In Haemophilus influenzae (strain ATCC 51907 / DSM 11121 / KW20 / Rd), this protein is Ferrochelatase.